Consider the following 548-residue polypeptide: Chaperonin GroEL (548 aa).

Residues 30–33 (TLGP), Lys51, 87–91 (DGTTT), Gly415, 478–480 (NAA), and Asp494 contribute to the ATP site.

Belongs to the chaperonin (HSP60) family. Forms a cylinder of 14 subunits composed of two heptameric rings stacked back-to-back. Interacts with the co-chaperonin GroES.

The protein resides in the cytoplasm. The catalysed reaction is ATP + H2O + a folded polypeptide = ADP + phosphate + an unfolded polypeptide.. Together with its co-chaperonin GroES, plays an essential role in assisting protein folding. The GroEL-GroES system forms a nano-cage that allows encapsulation of the non-native substrate proteins and provides a physical environment optimized to promote and accelerate protein folding. This chain is Chaperonin GroEL, found in Trichlorobacter lovleyi (strain ATCC BAA-1151 / DSM 17278 / SZ) (Geobacter lovleyi).